The sequence spans 446 residues: MITIKKGLDLPIAGTPEQVIHDGPSITEIAILGEEYVGMRPFMAVKVGDIVKKGQILFSDKRNSGVHFTSPASGTVKAINRGAQRVLQSVVIAIEGKESISFPKYTSTELKNVGRAEIVKNLIDSGAWTALRTRPFSKIPAVDAEPVSIFVTAMDTNPLAADAELIINTNKQAFTDGLALLEQLTAGKVYVCKGETNLPKSESVNVEEKLFSGVHPAGLAGTHIHFIDPVSAVKQVWSINYQDVIAFGMLFTTGELYTNKVISLAGPAVKKPRLLRTHYGASINQLTKNELIDDEVRVISGSVLCGVTATAAHAYLGRYHNQISVLAEGYEKELFGWGVPGSKKHSVSNAFISAFNRAKSFAFTTTTGGSKRAMVPIGQYERIMPLDILPTNLLRDLIVGDTEEAQALGCLELDEEDLALCTYVCPGKYDYGSVLRASLSKIEKEG.

The protein belongs to the NqrA family. Composed of six subunits; NqrA, NqrB, NqrC, NqrD, NqrE and NqrF.

It catalyses the reaction a ubiquinone + n Na(+)(in) + NADH + H(+) = a ubiquinol + n Na(+)(out) + NAD(+). NQR complex catalyzes the reduction of ubiquinone-1 to ubiquinol by two successive reactions, coupled with the transport of Na(+) ions from the cytoplasm to the periplasm. NqrA to NqrE are probably involved in the second step, the conversion of ubisemiquinone to ubiquinol. The polypeptide is Na(+)-translocating NADH-quinone reductase subunit A (Psychromonas ingrahamii (strain DSM 17664 / CCUG 51855 / 37)).